The chain runs to 139 residues: ATP synthase epsilon chain (139 aa).

Belongs to the ATPase epsilon chain family. As to quaternary structure, F-type ATPases have 2 components, CF(1) - the catalytic core - and CF(0) - the membrane proton channel. CF(1) has five subunits: alpha(3), beta(3), gamma(1), delta(1), epsilon(1). CF(0) has three main subunits: a, b and c.

The protein resides in the cell membrane. In terms of biological role, produces ATP from ADP in the presence of a proton gradient across the membrane. The polypeptide is ATP synthase epsilon chain (Ligilactobacillus salivarius (strain UCC118) (Lactobacillus salivarius)).